A 291-amino-acid chain; its full sequence is Elongation factor Ts (291 aa).

The tract at residues 79–82 is involved in Mg(2+) ion dislocation from EF-Tu; that stretch reads TDFV.

The protein belongs to the EF-Ts family.

It is found in the cytoplasm. Functionally, associates with the EF-Tu.GDP complex and induces the exchange of GDP to GTP. It remains bound to the aminoacyl-tRNA.EF-Tu.GTP complex up to the GTP hydrolysis stage on the ribosome. This chain is Elongation factor Ts, found in Jannaschia sp. (strain CCS1).